The following is a 343-amino-acid chain: Aspartate carbamoyltransferase catalytic subunit (343 aa).

Carbamoyl phosphate-binding residues include Arg71 and Thr72. Lys99 is an L-aspartate binding site. Carbamoyl phosphate is bound by residues Arg121, His149, and Gln152. 2 residues coordinate L-aspartate: Arg195 and Arg249. 2 residues coordinate carbamoyl phosphate: Gly290 and Pro291.

This sequence belongs to the aspartate/ornithine carbamoyltransferase superfamily. ATCase family. Heterododecamer (2C3:3R2) of six catalytic PyrB chains organized as two trimers (C3), and six regulatory PyrI chains organized as three dimers (R2).

The enzyme catalyses carbamoyl phosphate + L-aspartate = N-carbamoyl-L-aspartate + phosphate + H(+). The protein operates within pyrimidine metabolism; UMP biosynthesis via de novo pathway; (S)-dihydroorotate from bicarbonate: step 2/3. Functionally, catalyzes the condensation of carbamoyl phosphate and aspartate to form carbamoyl aspartate and inorganic phosphate, the committed step in the de novo pyrimidine nucleotide biosynthesis pathway. In Rhodopirellula baltica (strain DSM 10527 / NCIMB 13988 / SH1), this protein is Aspartate carbamoyltransferase catalytic subunit.